The primary structure comprises 368 residues: Chaperone protein DnaJ (368 aa).

A J domain is found at 5–69 (DYYEVLGLSQ…QKRAQYDQFG (65 aa)). A CR-type zinc finger spans residues 130–212 (GKELNVEIPV…CHGSGKVRKR (83 aa)). Zn(2+)-binding residues include Cys143, Cys146, Cys160, Cys163, Cys186, Cys189, Cys200, and Cys203. 4 CXXCXGXG motif repeats span residues 143–150 (CDTCKGSG), 160–167 (CKHCSGSG), 186–193 (CGHCSGTG), and 200–207 (CTTCHGSG).

This sequence belongs to the DnaJ family. In terms of assembly, homodimer. Zn(2+) is required as a cofactor.

It is found in the cytoplasm. Participates actively in the response to hyperosmotic and heat shock by preventing the aggregation of stress-denatured proteins and by disaggregating proteins, also in an autonomous, DnaK-independent fashion. Unfolded proteins bind initially to DnaJ; upon interaction with the DnaJ-bound protein, DnaK hydrolyzes its bound ATP, resulting in the formation of a stable complex. GrpE releases ADP from DnaK; ATP binding to DnaK triggers the release of the substrate protein, thus completing the reaction cycle. Several rounds of ATP-dependent interactions between DnaJ, DnaK and GrpE are required for fully efficient folding. Also involved, together with DnaK and GrpE, in the DNA replication of plasmids through activation of initiation proteins. The protein is Chaperone protein DnaJ of Bacillus mycoides (strain KBAB4) (Bacillus weihenstephanensis).